The chain runs to 172 residues: Nicotinamide-nucleotide adenylyltransferase (172 aa).

This sequence belongs to the archaeal NMN adenylyltransferase family.

It is found in the cytoplasm. The catalysed reaction is beta-nicotinamide D-ribonucleotide + ATP + H(+) = diphosphate + NAD(+). Its pathway is cofactor biosynthesis; NAD(+) biosynthesis; NAD(+) from nicotinamide D-ribonucleotide: step 1/1. The polypeptide is Nicotinamide-nucleotide adenylyltransferase (Methanococcus aeolicus (strain ATCC BAA-1280 / DSM 17508 / OCM 812 / Nankai-3)).